The primary structure comprises 217 residues: Adenylate kinase (217 aa).

Position 10-15 (10-15 (GAGKGT)) interacts with ATP. The interval 30 to 59 (STGDMFRAAMKEETDLGLEAKSYIDKGELV) is NMP. AMP-binding positions include T31, R36, 57-59 (ELV), 85-88 (GFPR), and Q92. Residues 126–163 (GRRICKNCGATYHLVFNPPAKENVCDKCGGELYQREDD) are LID. ATP is bound at residue R127. Zn(2+) contacts are provided by C130 and C133. 136–137 (TY) is a binding site for ATP. Zn(2+)-binding residues include C150 and C153. The AMP site is built by R160 and R171. K199 lines the ATP pocket.

This sequence belongs to the adenylate kinase family. In terms of assembly, monomer.

The protein resides in the cytoplasm. It carries out the reaction AMP + ATP = 2 ADP. Its pathway is purine metabolism; AMP biosynthesis via salvage pathway; AMP from ADP: step 1/1. Functionally, catalyzes the reversible transfer of the terminal phosphate group between ATP and AMP. Plays an important role in cellular energy homeostasis and in adenine nucleotide metabolism. The chain is Adenylate kinase from Bacillus licheniformis (strain ATCC 14580 / DSM 13 / JCM 2505 / CCUG 7422 / NBRC 12200 / NCIMB 9375 / NCTC 10341 / NRRL NRS-1264 / Gibson 46).